The sequence spans 1112 residues: cGMP-inhibited 3',5'-cyclic phosphodiesterase 3B (1112 aa).

The segment covering 1–10 (MRRDERDAKA) has biased composition (basic and acidic residues). The interaction with RAPGEF3 stretch occupies residues 1-25 (MRRDERDAKAMRSLQPPDGAGSPPE). The interval 1 to 26 (MRRDERDAKAMRSLQPPDGAGSPPES) is disordered. Position 13 is a phosphoserine (serine 13). 6 helical membrane passes run 88–108 (FVLA…AAWL), 117–137 (HSLS…CFLT), 152–172 (WWLL…WQWW), 192–212 (AAAG…TLAH), 220–240 (VLVL…LGSL), and 247–267 (LLSG…DHFF). Residue serine 295 is modified to Phosphoserine; by PKB/AKT1 or PKB/AKT2. Serine 296 and serine 442 each carry phosphoserine. Residues 418–471 (EKGDRKLNKGLNRNSLPTPQLRRSSGTSGLLPVEQSSRWDRNNGKRPHQEFGIS) are disordered. Residues 428-445 (LNRNSLPTPQLRRSSGTS) are compositionally biased toward polar residues. An interaction with PIK3R6 region spans residues 436 to 460 (PQLRRSSGTSGLLPVEQSSRWDRNN). Positions 454-466 (SRWDRNNGKRPHQ) are enriched in basic and acidic residues. The PDEase domain maps to 651–1079 (TNIEQEVSLD…KIWKEIVEEE (429 aa)). The active-site Proton donor is the histidine 737. Residue histidine 737 coordinates AMP. Mg(2+) contacts are provided by histidine 741, histidine 821, aspartate 822, and aspartate 937. AMP-binding residues include aspartate 822, aspartate 937, and glutamine 988. Acidic residues-rich tracts occupy residues 1017–1041 (EEDN…EEME) and 1103–1112 (QVIEEADEEE). Disordered stretches follow at residues 1017–1051 (EEDN…PPRR) and 1092–1112 (ENSS…DEEE).

This sequence belongs to the cyclic nucleotide phosphodiesterase family. PDE3 subfamily. Homodimer. Interacts with PIK3CG; regulates PDE3B activity and thereby cAMP levels in cells. Interacts with RAPGEF3 and PIK3R6; form a signaling complex that regulates phosphatidylinositol 3-kinase gamma in angiogenesis. Interacts with ABHD15; this interaction regulates PDE3B's stability and expression and, thereby, impacts the antilipolytic action of insulin. Mg(2+) serves as cofactor. Requires Mn(2+) as cofactor. Phosphorylation at Ser-295 mediates insulin-induced activation of PDE3B. In terms of tissue distribution, abundant in adipose tissues.

Its subcellular location is the membrane. The enzyme catalyses a nucleoside 3',5'-cyclic phosphate + H2O = a nucleoside 5'-phosphate + H(+). It catalyses the reaction 3',5'-cyclic AMP + H2O = AMP + H(+). It carries out the reaction 3',5'-cyclic GMP + H2O = GMP + H(+). Inhibited by cGMP. Cyclic nucleotide phosphodiesterase with a dual-specificity for the second messengers cAMP and cGMP, which are key regulators of many important physiological process. Regulates angiogenesis by inhibiting the cAMP-dependent guanine nucleotide exchange factor RAPGEF3 and downstream phosphatidylinositol 3-kinase gamma-mediated signaling. Controls cardiac contractility by reducing cAMP concentration in cardiocytes. This Homo sapiens (Human) protein is cGMP-inhibited 3',5'-cyclic phosphodiesterase 3B.